A 386-amino-acid chain; its full sequence is ABC transporter permease protein NatB (386 aa).

A run of 6 helical transmembrane segments spans residues 19–39, 172–192, 226–246, 273–293, 300–320, and 353–373; these read TILL…FFYE, AIML…SGAM, WLAV…FLIL, ALII…ISIM, AQSY…FIFS, and ATIL…FLLA.

In terms of assembly, the complex is composed of NatA and NatB.

The protein localises to the cell membrane. The enzyme catalyses Na(+)(in) + ATP + H2O = Na(+)(out) + ADP + phosphate + H(+). Part of an ABC transporter that catalyzes ATP-dependent electrogenic sodium extrusion. The sequence is that of ABC transporter permease protein NatB from Bacillus subtilis (strain 168).